The chain runs to 147 residues: Nudix hydrolase 1 (147 aa).

Residue serine 2 is modified to N-acetylserine. The region spanning 7–140 is the Nudix hydrolase domain; sequence IPRVAVVVFI…EKLFGSGFNP (134 aa). Residues 41–62 carry the Nudix box motif; that stretch reads GHLEFGESFEECAAREVMEETG. The Mg(2+) site is built by glutamate 56 and glutamate 60.

It belongs to the Nudix hydrolase family. In terms of assembly, homodimer. Mg(2+) is required as a cofactor. Requires Mn(2+) as cofactor. Expressed in roots, stems and leaves.

Its subcellular location is the cytoplasm. It catalyses the reaction 7,8-dihydroneopterin 3'-triphosphate + H2O = 7,8-dihydroneopterin 3'-phosphate + diphosphate + H(+). The catalysed reaction is NAD(+) + H2O = beta-nicotinamide D-ribonucleotide + AMP + 2 H(+). It carries out the reaction NADH + H2O = reduced beta-nicotinamide D-ribonucleotide + AMP + 2 H(+). The enzyme catalyses 8-oxo-dGTP + H2O = 8-oxo-dGMP + diphosphate + H(+). Its function is as follows. Mediates the hydrolysis of some nucleoside diphosphate derivatives. Its substrate specificity is unclear. In vitro, it can use NTP, dNTP, 8-oxo-GTP, 8-oxo-dGTP, dGTP, dATP, dTTP or dihydroneopterin triphosphate (DHNTP) as substrate. Has some NADH pyrophosphatase activity in vitro; however, such activity may not be relevant in vivo due to the high concentration of manganese used during the experiments. Plays an important role in protection against oxidative DNA and RNA damage by removing oxidatively damaged form of guanine. This chain is Nudix hydrolase 1 (NUDT1), found in Arabidopsis thaliana (Mouse-ear cress).